A 78-amino-acid chain; its full sequence is RTX-VII (78 aa).

The N-terminal stretch at 1-22 is a signal peptide; sequence MKTIVYLIVSILLLSSTVLVLA. Positions 23-40 are excised as a propeptide; the sequence is EGNAASHELQEYPIEEQR. Cystine bridges form between Cys42–Cys58, Cys47–Cys63, Cys57–Cys73, and Cys65–Cys71. The residue at position 76 (Arg76) is an Arginine amide.

Expressed by the venom gland.

Its subcellular location is the secreted. Its function is as follows. Agonist of rat Nav1.3/SCN3A. This toxin increases the peak current amplitude, and potently inhibits the fast inactivation of the channel (EC(50)=120 nM). The inhibition of fast inactivation is voltage-independent (depolarizing voltages ranging from 220 mV to 130 mV). The toxin might bind to the domain IV of the Nav1.3 channel, while domain II might not participate in interacting with the toxin but could determine the efficacy of RTX-VII. In vivo, when intracerebroventricularly injected into mice, the toxin causes involuntary body twitching (seizure-like symptoms). The sequence is that of RTX-VII from Macrothele raveni (Funnel-web spider).